Here is a 1825-residue protein sequence, read N- to C-terminus: Serine protease/ABC transporter B family protein tagD (1825 aa).

Positions 1–26 (MKSNTNIRVLLVSGLILIFIFLGIKF) are cleaved as a signal peptide. One can recognise a Peptidase S8 domain in the interval 307–727 (PKAIFGTKDT…NAVFDTFAGA (421 aa)). Catalysis depends on charge relay system residues Asp-338 and His-384. Asn-629 is a glycosylation site (N-linked (GlcNAc...) asparagine). Ser-652 (charge relay system) is an active-site residue. Residues Asn-704, Asn-781, Asn-849, and Asn-896 are each glycosylated (N-linked (GlcNAc...) asparagine). Residues 971 to 991 (YIVIIVAGGTMSLIITVLILI) traverse the membrane as a helical segment. Asn-1018 is a glycosylation site (N-linked (GlcNAc...) asparagine). Helical transmembrane passes span 1071–1091 (FIIEITISTACSLVATAASIL), 1116–1136 (FIIIFLLALLEFVFSTISSWI), 1189–1209 (GILLSVSVGICKFVGSLVFIF), and 1210–1230 (TISWKLSLAFFATVPVLAIVT). Positions 1075-1358 (ITISTACSLV…LFGVYSSYVQ (284 aa)) constitute an ABC transmembrane type-1 domain. An N-linked (GlcNAc...) asparagine glycan is attached at Asn-1295. The next 2 membrane-spanning stretches (helical) occupy residues 1304-1324 (WLMVESLAFIILYFGAYLAIQ) and 1327-1347 (FTVGLLVSFSLYIGYVIDSST). The interval 1386–1529 (DNIIDTNQDN…NDDPNDNNGI (144 aa)) is disordered. Positions 1388-1402 (IIDTNQDNNNNNNND) are enriched in low complexity. Residues 1403-1415 (DISDSSSDDDDDN) show a composition bias toward acidic residues. A glycan (N-linked (GlcNAc...) asparagine) is linked at Asn-1424. Positions 1465–1494 (GEGIDNNNNNNNDNNINDDNNQQDPNNNNN) are enriched in low complexity. Residues 1495–1514 (EIDDDGDDDGDDDDEGEDEN) show a composition bias toward acidic residues. Residues 1515 to 1529 (NNNNNNDDPNDNNGI) show a composition bias toward low complexity. Residues 1576–1813 (IEFKNVSFCY…KGKYYRMFAF (238 aa)) enclose the ABC transporter domain. N-linked (GlcNAc...) asparagine glycosylation occurs at Asn-1580. Residue 1611 to 1618 (GPSGSGKS) coordinates ATP. N-linked (GlcNAc...) asparagine glycosylation is found at Asn-1715 and Asn-1755.

The protein in the C-terminal section; belongs to the ABC transporter superfamily. ABCB family. Multidrug resistance exporter (TC 3.A.1.201) subfamily. This sequence in the N-terminal section; belongs to the peptidase S8 family.

The protein resides in the membrane. This chain is Serine protease/ABC transporter B family protein tagD (tagD), found in Dictyostelium discoideum (Social amoeba).